A 116-amino-acid polypeptide reads, in one-letter code: Large ribosomal subunit protein uL18 (116 aa).

This sequence belongs to the universal ribosomal protein uL18 family. In terms of assembly, part of the 50S ribosomal subunit; part of the 5S rRNA/L5/L18/L25 subcomplex. Contacts the 5S and 23S rRNAs.

Its function is as follows. This is one of the proteins that bind and probably mediate the attachment of the 5S RNA into the large ribosomal subunit, where it forms part of the central protuberance. The sequence is that of Large ribosomal subunit protein uL18 from Acinetobacter baumannii (strain AB307-0294).